A 630-amino-acid chain; its full sequence is Chaperone protein DnaK (630 aa).

At T198 the chain carries Phosphothreonine; by autocatalysis. The tract at residues 604-630 (AAAAPGEEAPKDDDVVDAEFSEVDDKK) is disordered. Residues 617–630 (DVVDAEFSEVDDKK) are compositionally biased toward acidic residues.

This sequence belongs to the heat shock protein 70 family.

Its function is as follows. Acts as a chaperone. The sequence is that of Chaperone protein DnaK from Rhizorhabdus wittichii (strain DSM 6014 / CCUG 31198 / JCM 15750 / NBRC 105917 / EY 4224 / RW1) (Sphingomonas wittichii).